The following is a 524-amino-acid chain: Dihydromonacolin L monooxygenase mokC (524 aa).

Residues 1 to 25 (MTVPTDTVSRRLQSLAWSDIKQHAP) lie on the Cytoplasmic side of the membrane. A helical; Signal-anchor for type II membrane protein membrane pass occupies residues 26 to 47 (WLPSSRTLVSGFLCLILLQILY). Topologically, residues 48–524 (SRGRKSDLRV…LMMRRRDEDL (477 aa)) are lumenal. Residues Asn-396 and Asn-401 are each glycosylated (N-linked (GlcNAc...) asparagine). Heme is bound at residue Cys-467.

The protein belongs to the cytochrome P450 family. The cofactor is heme.

The protein resides in the endoplasmic reticulum membrane. It catalyses the reaction dihydromonacolin L carboxylate + reduced [NADPH--hemoprotein reductase] + O2 = monacolin L carboxylate + oxidized [NADPH--hemoprotein reductase] + 2 H2O + H(+). The enzyme catalyses monacolin L carboxylate + reduced [NADPH--hemoprotein reductase] + O2 = monacolin J carboxylate + oxidized [NADPH--hemoprotein reductase] + H2O + H(+). Its pathway is polyketide biosynthesis; lovastatin biosynthesis. Its function is as follows. Cytochrome P450 monooxygenase; part of the gene cluster that mediates the biosynthesis of monakolin K, also known as lovastatin, and which acts as a potent competitive inhibitor of HMG-CoA reductase. Monakolin K biosynthesis is performed in two stages. The first stage is catalyzed by the nonaketide synthase mokA, which belongs to type I polyketide synthases and catalyzes the iterative nine-step formation of the polyketide. This PKS stage is completed by the action of dehydrogenase mokE, which catalyzes the NADPH-dependent reduction of the unsaturated tetra-, penta- and heptaketide intermediates that arise during the mokA-mediated biosynthesis of the nonaketide chain and leads to dihydromonacolin L. Covalently bound dihydromonacolin L is released from mokA by the mokD esterase. Conversion of dihydromonacolin L into monacolin L and then monacolin J is subsequently performed with the participation of molecular oxygen and P450 monoogygenase mokC. Finally, mokF performs the conversion of monacoline J to monacoline K through the addition of the side-chain diketide moiety (2R)-2-methylbutanoate produced by the diketide synthase mokB. The sequence is that of Dihydromonacolin L monooxygenase mokC from Monascus pilosus (Red mold).